We begin with the raw amino-acid sequence, 241 residues long: Aquaporin Z 1 (241 aa).

Residues 23 to 43 (AVFAAAFPELGIGFLGVAFAF) traverse the membrane as a helical segment. An NPA 1 motif is present at residues 63–65 (NPA). The next 3 membrane-spanning stretches (helical) occupy residues 85 to 105 (IVAQ…ILTG), 129 to 149 (LLSA…VILG), and 156 to 176 (PVGF…LISI). Residues 184–186 (NPA) carry the NPA 2 motif. The chain crosses the membrane as a helical span at residues 204 to 224 (WLFWLAPILGGAIGAVVWKIF).

It belongs to the MIP/aquaporin (TC 1.A.8) family. In terms of assembly, homotetramer.

The protein resides in the cell inner membrane. The catalysed reaction is H2O(in) = H2O(out). Channel that permits osmotically driven movement of water in both directions. It is involved in the osmoregulation and in the maintenance of cell turgor during volume expansion in rapidly growing cells. It mediates rapid entry or exit of water in response to abrupt changes in osmolarity. The protein is Aquaporin Z 1 of Agrobacterium fabrum (strain C58 / ATCC 33970) (Agrobacterium tumefaciens (strain C58)).